A 361-amino-acid polypeptide reads, in one-letter code: uncharacterized protein (361 aa).

The first 17 residues, 1-17, serve as a signal peptide directing secretion; the sequence is MNLFIYVLLLSIWTSSC. Over 18-47 the chain is Extracellular; sequence LDRNESNGSATAVTTHAEFKQTKLQELRRR. Asn-24 carries N-linked (GlcNAc...) asparagine glycosylation. Residues 48-68 form a helical membrane-spanning segment; sequence LLIIVIGTLITGYMVSCTCLL. The Cytoplasmic segment spans residues 69-361; that stretch reads HYSCDSEEAH…EDIYKNSRNN (293 aa). The span at 95–106 shows a compositional bias: polar residues; it reads SSKISFTDSKSP. Positions 95 to 197 are disordered; the sequence is SSKISFTDSK…SQVSPSYPEK (103 aa). Residues 144 to 158 are compositionally biased toward low complexity; that stretch reads PSSQKKPSKPSAPKK. The span at 169-185 shows a compositional bias: basic residues; it reads HRTRSPKKAHRQAHAHK.

It localises to the membrane. This is an uncharacterized protein from Bos taurus (Bovine).